We begin with the raw amino-acid sequence, 480 residues long: MADLQRFLQDRCLGVSNLPQKGRSLFTARDFRPGEVILSQKPYICVPNNTSSESRCDGCFKTNNLKKCSACQVVWYCGSSCQKSEWKLHRDECKALTRLEKEKRKFVTPTIRLMVRLYIKRNLQNEKVLPITTTDNYSLVEALVSHMSEIDEKQMLLYAQMANLVNLILQFPSVDLREIAENFSKFSCNAHSICDSELRPQGIGLFPLVSIINHSCSPNAVLVFEEQMAVVRAMDNISKDSEITISYIETAGSTLTRQKSLKEQYLFHCQCARCSNFGKPHDIEESAILEGYRCANEKCTGFLLRDPEEKGFVCQKCLLLRSKEEVKKLASDLKTVSEKAPTSPSAEDKQAAIELYKTIEKLQVKLYHSFSIPLMRTREKLLKMLMDVEIWREALNYCRLIVPVYQRVYPATHPLIGLQFYTQGKLEWLLGETKEAVSSLIKAFDILRISHGISTPFMKELSAKLEEARAEASYKQLALH.

The region spanning 11-248 (RCLGVSNLPQ…KDSEITISYI (238 aa)) is the SET domain. Zn(2+) contacts are provided by C56, C59, C68, C71, C77, C81, H89, and C93. The segment at 56 to 93 (CDGCFKTNNLKKCSACQVVWYCGSSCQKSEWKLHRDEC) adopts an MYND-type zinc-finger fold.

The protein belongs to the class V-like SAM-binding methyltransferase superfamily. Histone-lysine methyltransferase family. SET2 subfamily.

The protein localises to the nucleus. It localises to the chromosome. It carries out the reaction L-lysyl-[histone] + S-adenosyl-L-methionine = N(6)-methyl-L-lysyl-[histone] + S-adenosyl-L-homocysteine + H(+). In terms of biological role, histone methyltransferase. In Arabidopsis thaliana (Mouse-ear cress), this protein is Histone-lysine N-methyltransferase ASHR1 (ASHR1).